The sequence spans 229 residues: Orotate phosphoribosyltransferase (229 aa).

Residues R107, K108, K111, H113, and 133-141 (EDLTTAGGS) contribute to the 5-phospho-alpha-D-ribose 1-diphosphate site. Residue T137 participates in orotate binding.

Belongs to the purine/pyrimidine phosphoribosyltransferase family. PyrE subfamily. In terms of assembly, homodimer. It depends on Mg(2+) as a cofactor.

It catalyses the reaction orotidine 5'-phosphate + diphosphate = orotate + 5-phospho-alpha-D-ribose 1-diphosphate. It functions in the pathway pyrimidine metabolism; UMP biosynthesis via de novo pathway; UMP from orotate: step 1/2. Catalyzes the transfer of a ribosyl phosphate group from 5-phosphoribose 1-diphosphate to orotate, leading to the formation of orotidine monophosphate (OMP). The chain is Orotate phosphoribosyltransferase from Rhizobium etli (strain ATCC 51251 / DSM 11541 / JCM 21823 / NBRC 15573 / CFN 42).